We begin with the raw amino-acid sequence, 545 residues long: Threonine--tRNA ligase catalytic subunit (545 aa).

The interval 139 to 433 (DHRLIGEKLD…LLEHFKGKLP (295 aa)) is catalytic. Zn(2+) is bound by residues Cys231, His282, and His410.

Belongs to the class-II aminoacyl-tRNA synthetase family. As to quaternary structure, homodimer. Probably interacts with its editing subunit. Zn(2+) serves as cofactor.

The protein resides in the cytoplasm. It carries out the reaction tRNA(Thr) + L-threonine + ATP = L-threonyl-tRNA(Thr) + AMP + diphosphate + H(+). Catalyzes the attachment of threonine to tRNA(Thr) in a two-step reaction: L-threonine is first activated by ATP to form Thr-AMP and then transferred to the acceptor end of tRNA(Thr). Also activates L-serine and transfers it to tRNA(Thr) but cannot deacylate incorrectly charged amino acid; unlike most archaea the editing function is found in a freestanding protein. This chain is Threonine--tRNA ligase catalytic subunit, found in Saccharolobus islandicus (strain M.16.27) (Sulfolobus islandicus).